A 315-amino-acid polypeptide reads, in one-letter code: Phosphate transport system permease protein PstC (315 aa).

The Cytoplasmic portion of the chain corresponds to 1 to 22 (MLTKSRKYFNQTWIESLFKQTT). A helical transmembrane segment spans residues 23–43 (ALFALLVFILLAAILISLVIG). Topologically, residues 44-77 (SWESIKRFGGSFLLETYWDPVQEQYGAIIPILGT) are periplasmic. An ABC transmembrane type-1 domain is found at 74-302 (ILGTLITAGI…VITTMVLILS (229 aa)). Residues 78-98 (LITAGIALFIAVPISFGIAIF) traverse the membrane as a helical segment. Residues 99 to 117 (LTELAPNWLKRPISIAIEM) lie on the Cytoplasmic side of the membrane. A helical transmembrane segment spans residues 118–138 (LAAIPSIIYGMWGLFVFVPLF). The Periplasmic segment spans residues 139–164 (QEHIQPVLIDNLGNLPGLELFFSGVP). A helical transmembrane segment spans residues 165–185 (FGVGLFTAGLVLAIMIIPFIA). Residues 186 to 223 (SVMRDVFSIVPPMLKEGAYGLGATTWEVVRQVIVPHTR) lie on the Cytoplasmic side of the membrane. The helical transmembrane segment at 224–244 (IGLVGSVMLGLGRALGETMAI) threads the bilayer. Over 245–281 (TFIIGNSFQLPNSLFSPSTSIASAIANEFNEAGGLQK) the chain is Periplasmic. The chain crosses the membrane as a helical span at residues 282–302 (SALMELGLLLFVITTMVLILS). At 303–315 (RLMITKMQQTKGK) the chain is on the cytoplasmic side.

This sequence belongs to the binding-protein-dependent transport system permease family. CysTW subfamily.

The protein localises to the cell inner membrane. In terms of biological role, part of the binding-protein-dependent transport system for phosphate; probably responsible for the translocation of the substrate across the membrane. The polypeptide is Phosphate transport system permease protein PstC (pstC) (Haemophilus influenzae (strain ATCC 51907 / DSM 11121 / KW20 / Rd)).